The chain runs to 244 residues: 3-deoxy-manno-octulosonate cytidylyltransferase (244 aa).

This sequence belongs to the KdsB family.

Its subcellular location is the cytoplasm. It carries out the reaction 3-deoxy-alpha-D-manno-oct-2-ulosonate + CTP = CMP-3-deoxy-beta-D-manno-octulosonate + diphosphate. It functions in the pathway nucleotide-sugar biosynthesis; CMP-3-deoxy-D-manno-octulosonate biosynthesis; CMP-3-deoxy-D-manno-octulosonate from 3-deoxy-D-manno-octulosonate and CTP: step 1/1. The protein operates within bacterial outer membrane biogenesis; lipopolysaccharide biosynthesis. In terms of biological role, activates KDO (a required 8-carbon sugar) for incorporation into bacterial lipopolysaccharide in Gram-negative bacteria. In Rickettsia canadensis (strain McKiel), this protein is 3-deoxy-manno-octulosonate cytidylyltransferase.